The chain runs to 282 residues: Large ribosomal subunit protein uL2 (282 aa).

A disordered region spans residues 230–282 (AMNPIDHPLGGGEGRSSGGRHPVSPWGMPAKGYKTRDKKKASSRLIVKRRGQK). Basic residues predominate over residues 265–282 (RDKKKASSRLIVKRRGQK).

Belongs to the universal ribosomal protein uL2 family. Part of the 50S ribosomal subunit. Forms a bridge to the 30S subunit in the 70S ribosome.

In terms of biological role, one of the primary rRNA binding proteins. Required for association of the 30S and 50S subunits to form the 70S ribosome, for tRNA binding and peptide bond formation. It has been suggested to have peptidyltransferase activity; this is somewhat controversial. Makes several contacts with the 16S rRNA in the 70S ribosome. The polypeptide is Large ribosomal subunit protein uL2 (Desulfovibrio desulfuricans (strain ATCC 27774 / DSM 6949 / MB)).